The chain runs to 497 residues: UDP-N-acetylmuramoyl-L-alanyl-D-glutamate--2,6-diaminopimelate ligase (497 aa).

2 residues coordinate UDP-N-acetyl-alpha-D-muramoyl-L-alanyl-D-glutamate: leucine 27 and serine 29. Residue 116-122 (GTNGKTT) coordinates ATP. UDP-N-acetyl-alpha-D-muramoyl-L-alanyl-D-glutamate contacts are provided by residues asparagine 157, 158–159 (TT), serine 185, glutamine 191, and arginine 193. An N6-carboxylysine modification is found at lysine 225. Residues arginine 392, 416–419 (DNPR), glycine 467, and glutamate 471 contribute to the meso-2,6-diaminopimelate site. The Meso-diaminopimelate recognition motif motif lies at 416 to 419 (DNPR).

It belongs to the MurCDEF family. MurE subfamily. It depends on Mg(2+) as a cofactor. In terms of processing, carboxylation is probably crucial for Mg(2+) binding and, consequently, for the gamma-phosphate positioning of ATP.

The protein localises to the cytoplasm. The catalysed reaction is UDP-N-acetyl-alpha-D-muramoyl-L-alanyl-D-glutamate + meso-2,6-diaminopimelate + ATP = UDP-N-acetyl-alpha-D-muramoyl-L-alanyl-gamma-D-glutamyl-meso-2,6-diaminopimelate + ADP + phosphate + H(+). It functions in the pathway cell wall biogenesis; peptidoglycan biosynthesis. Functionally, catalyzes the addition of meso-diaminopimelic acid to the nucleotide precursor UDP-N-acetylmuramoyl-L-alanyl-D-glutamate (UMAG) in the biosynthesis of bacterial cell-wall peptidoglycan. In Buchnera aphidicola subsp. Schizaphis graminum (strain Sg), this protein is UDP-N-acetylmuramoyl-L-alanyl-D-glutamate--2,6-diaminopimelate ligase.